Consider the following 608-residue polypeptide: UvrABC system protein C (608 aa).

Residues 13–91 (HKPGVYIMHD…IKKNSPKYNI (79 aa)) form the GIY-YIG domain. The region spanning 202-237 (DELTKKLTDKMMAASKNLNFELAAKLRDSITNIQVI) is the UVR domain.

This sequence belongs to the UvrC family. As to quaternary structure, interacts with UvrB in an incision complex.

The protein resides in the cytoplasm. Functionally, the UvrABC repair system catalyzes the recognition and processing of DNA lesions. UvrC both incises the 5' and 3' sides of the lesion. The N-terminal half is responsible for the 3' incision and the C-terminal half is responsible for the 5' incision. This Finegoldia magna (strain ATCC 29328 / DSM 20472 / WAL 2508) (Peptostreptococcus magnus) protein is UvrABC system protein C.